Here is a 44-residue protein sequence, read N- to C-terminus: Photosystem II reaction center protein K (44 aa).

A propeptide spanning residues 1–7 (METLLLS) is cleaved from the precursor. A helical transmembrane segment spans residues 23 to 43 (LPIIPVFFLLLAFVWQAAIGF).

It belongs to the PsbK family. In terms of assembly, PSII is composed of 1 copy each of membrane proteins PsbA, PsbB, PsbC, PsbD, PsbE, PsbF, PsbH, PsbI, PsbJ, PsbK, PsbL, PsbM, PsbT, PsbX, PsbY, PsbZ, Psb30/Ycf12, at least 3 peripheral proteins of the oxygen-evolving complex and a large number of cofactors. It forms dimeric complexes.

It localises to the plastid. The protein localises to the chloroplast thylakoid membrane. Functionally, one of the components of the core complex of photosystem II (PSII). PSII is a light-driven water:plastoquinone oxidoreductase that uses light energy to abstract electrons from H(2)O, generating O(2) and a proton gradient subsequently used for ATP formation. It consists of a core antenna complex that captures photons, and an electron transfer chain that converts photonic excitation into a charge separation. The sequence is that of Photosystem II reaction center protein K from Phaeodactylum tricornutum (strain CCAP 1055/1).